Reading from the N-terminus, the 783-residue chain is Probable phosphoketolase (783 aa).

It belongs to the XFP family. Thiamine diphosphate is required as a cofactor.

In Rhodopseudomonas palustris (strain ATCC BAA-98 / CGA009), this protein is Probable phosphoketolase.